Reading from the N-terminus, the 720-residue chain is Transcription factor bHLH155 (720 aa).

The segment covering 522-534 has biased composition (polar residues); it reads YPSSSSDQFQTSL. Residues 522–558 are disordered; it reads YPSSSSDQFQTSLDIPKKNKKRAKPGESSRPRPRDRQ. The short motif at 540–547 is the Nuclear localization signal element; it reads NKKRAKPG. The bHLH domain occupies 544–593; that stretch reads AKPGESSRPRPRDRQLIQDRIKELRELVPNGSKCSIDSLLERTIKHMLFL. Positions 545–558 are enriched in basic and acidic residues; that stretch reads KPGESSRPRPRDRQ.

It belongs to the bHLH protein family. LHW subfamily. In terms of assembly, homodimer.

The protein resides in the nucleus. Its function is as follows. Transcription factor that may regulate root development. This is Transcription factor bHLH155 (BHLH155) from Arabidopsis thaliana (Mouse-ear cress).